Here is a 207-residue protein sequence, read N- to C-terminus: Recombination protein RecR (207 aa).

The C4-type zinc finger occupies 60–75 (CRHCHNISDSDVCTIC). The 96-residue stretch at 83-178 (STLCVVENIR…RVSVIARGIA (96 aa)) folds into the Toprim domain.

The protein belongs to the RecR family.

Its function is as follows. May play a role in DNA repair. It seems to be involved in an RecBC-independent recombinational process of DNA repair. It may act with RecF and RecO. This is Recombination protein RecR from Porphyromonas gingivalis (strain ATCC BAA-308 / W83).